The chain runs to 116 residues: Large ribosomal subunit protein bL19 (116 aa).

Belongs to the bacterial ribosomal protein bL19 family.

This protein is located at the 30S-50S ribosomal subunit interface and may play a role in the structure and function of the aminoacyl-tRNA binding site. The sequence is that of Large ribosomal subunit protein bL19 from Pseudomonas putida (strain ATCC 700007 / DSM 6899 / JCM 31910 / BCRC 17059 / LMG 24140 / F1).